The primary structure comprises 364 residues: 3-isopropylmalate dehydrogenase (364 aa).

Position 78 to 89 (78 to 89) interacts with NAD(+); that stretch reads GPKWGTGAVRPE. Substrate-binding residues include arginine 96, arginine 106, arginine 135, and aspartate 224. Mg(2+) is bound by residues aspartate 224, aspartate 249, and aspartate 253. 288-299 provides a ligand contact to NAD(+); sequence GSAPDLPANKVN.

It belongs to the isocitrate and isopropylmalate dehydrogenases family. Homodimer. Mg(2+) serves as cofactor. It depends on Mn(2+) as a cofactor.

The protein localises to the cytoplasm. It carries out the reaction (2R,3S)-3-isopropylmalate + NAD(+) = 4-methyl-2-oxopentanoate + CO2 + NADH. It functions in the pathway amino-acid biosynthesis; L-leucine biosynthesis; L-leucine from 3-methyl-2-oxobutanoate: step 3/4. In terms of biological role, catalyzes the oxidation of 3-carboxy-2-hydroxy-4-methylpentanoate (3-isopropylmalate) to 3-carboxy-4-methyl-2-oxopentanoate. The product decarboxylates to 4-methyl-2 oxopentanoate. This is 3-isopropylmalate dehydrogenase (LEU2) from Wickerhamomyces anomalus (strain ATCC 8168 / CBS 5759 / DSM 6766 / JCM 3585 / IAM 12210 / NCYC 432 / NBRC 10213 / NRRL Y-366 / AJ 5027) (Yeast).